A 674-amino-acid chain; its full sequence is MKISDLGYDESFLDLFEGNDFELYDHQRMAIEQFRKGKNIMVSVPTAAGKTLIAYSAIYETFKKKLKSIYIVPLRSLAMEKYEELSRLRELGMRVKLSIGNYDDTPDFIKRYDVVILTSEKADSLMHHDPYMMEEVGLMVIDEIHMIGDEYRGPTLETVITTARYVNPETRIIALSATVSNASEIAEWLNASLIKSSFRPVPLKVGILYRNRLFLDGDARSDVDINLLVKETVDDGGQVLIFVSSRKRAEDMAKNLSQLFDPINDLKVSSEDANVYDDLLNEMLPHGVSFHHAGLSNEQRSFIEKAFRHRKLKVIVATPTLAAGVNLPARLVIVKDVTRYGDLGITYLSNMEVKQMIGRAGRPGYDQYGIGIIYAASANSYQVVKEYISEEPEPVDSYIGKPEKVRFNTLAAIAMGLATSQVEMEEFYRSTFYYAQNGEDEIPNRINESIKFLKENGFIKEKDSLRATEFGKMISNLYIDPESAIILKKYFDDNDDIDTALYYISLCREIAPINMQDDYAAMEFLESIGHIDGDIEAAKTALVLREWISEASTRRIFEMYGVAPGDLQARVNNADWISYSLAHLASIFKPERRRKLEILNMRIKEGIREELMDLVLIPAIGRVRARRLYEAGIHNVQELAFSDPSRIKMLYGFSDTLANAVVKRAKAIVSERIR.

Residues Q27 and V44 to T51 contribute to the ATP site. The Helicase ATP-binding domain occupies I31–S197. Residues D142–H145 carry the DEAH box motif. The 188-residue stretch at D224–A411 folds into the Helicase C-terminal domain.

It belongs to the helicase family. Hel308 subfamily. As to quaternary structure, monomer.

It carries out the reaction Couples ATP hydrolysis with the unwinding of duplex DNA by translocating in the 3'-5' direction.. The catalysed reaction is ATP + H2O = ADP + phosphate + H(+). In terms of biological role, DNA-dependent ATPase and 3'-5' DNA helicase that may be involved in repair of stalled replication forks. This chain is ATP-dependent DNA helicase Hel308, found in Thermoplasma volcanium (strain ATCC 51530 / DSM 4299 / JCM 9571 / NBRC 15438 / GSS1).